We begin with the raw amino-acid sequence, 474 residues long: Replication-associated protein (474 aa).

Positions 248–255 (GKRFQEDR) match the Nuclear localization signal motif. The segment at 455–474 (AFAPGFSLTSEPEPKRRRFF) is disordered.

Its subcellular location is the host nucleus. Plays an essential for the replication of viral DNA. Presumably cleaves viral genomic dsRNA replicative form to initiate rolling circle replication. The protein is Replication-associated protein of Avon-Heathcote Estuary associated kieseladnavirus (AHEaBV).